Consider the following 325-residue polypeptide: UPF0285 protein MMP0642 (325 aa).

It belongs to the UPF0285 family.

This Methanococcus maripaludis (strain DSM 14266 / JCM 13030 / NBRC 101832 / S2 / LL) protein is UPF0285 protein MMP0642.